Reading from the N-terminus, the 628-residue chain is MVAFSALSGVSAVSLLLSLVQNAHGISLKVSTQGGNSSSPILYGFMFEDINHSGDGGIYGQMLQNPGLQGTAPNLTAWAAVGDATIAIDGDSPLTSAIPSTIKLNIADDATGAVGLTNEGYWGIPVDGSEFHSSFWIKGDYSGDITVRLVGNYTGTEYGSTTITHTSTADNFTQASVKFPTTKAPDGNVLYELTVDGSVAAGSSLNFGYLTLFGETYKSRENGLKPQLANVLDDMKGSFLRFPGGNNLEGNSAENRWKWNETIGDLCDRPGREGTWTYYNTDGLGLHEYFYWCEDLGLVPVLGVWDGFALESGGNTPLTGDALTPYIDDVLNELEYILGDTSTTYGAWRAANGQEEPWNLTMVEIGNEDMLGGGCESYAERFTAFYDAIHAAYPDLILIASTSEADCLPESMPEGSWVDYHDYSTPDGLVGQFNYFDNLNRSVPYFIGEYSRWEIDWPNMKGSVAEAVFMIGFERNSDVVKMAAYAPLLQLINSTQWTPDLIGYTQSPGDIFLSTSYYVQEMFSRNRGDTIKEVTSDSDFGPLYWVASSAGDSYYVKLANYGSETQDLTVSIPGTSTGKLTVLADSDPDAYNSDTQTLVTPSESTVQASNGTFTFSLPAWAVAVLAAN.

Residues 1–25 form the signal peptide; the sequence is MVAFSALSGVSAVSLLLSLVQNAHG. Residues Asn36, Asn51, Asn74, Asn152, Asn171, Asn260, Asn359, Asn440, Asn493, and Asn610 are each glycosylated (N-linked (GlcNAc...) asparagine).

It belongs to the glycosyl hydrolase 51 family.

It catalyses the reaction Hydrolysis of terminal non-reducing alpha-L-arabinofuranoside residues in alpha-L-arabinosides.. The protein operates within glycan metabolism; L-arabinan degradation. In terms of biological role, acts only on small linear 1,5-alpha-linked L-arabinofuranosyl oligosaccharides. The protein is Alpha-L-arabinofuranosidase A (abfA) of Aspergillus niger.